The sequence spans 203 residues: FMN-dependent NADH:quinone oxidoreductase (203 aa).

Residues Ser-9 and 15–17 (SKS) contribute to the FMN site.

Belongs to the azoreductase type 1 family. In terms of assembly, homodimer. It depends on FMN as a cofactor.

It carries out the reaction 2 a quinone + NADH + H(+) = 2 a 1,4-benzosemiquinone + NAD(+). The enzyme catalyses N,N-dimethyl-1,4-phenylenediamine + anthranilate + 2 NAD(+) = 2-(4-dimethylaminophenyl)diazenylbenzoate + 2 NADH + 2 H(+). Functionally, quinone reductase that provides resistance to thiol-specific stress caused by electrophilic quinones. Its function is as follows. Also exhibits azoreductase activity. Catalyzes the reductive cleavage of the azo bond in aromatic azo compounds to the corresponding amines. This is FMN-dependent NADH:quinone oxidoreductase from Bordetella avium (strain 197N).